A 406-amino-acid polypeptide reads, in one-letter code: Magnesium transporter NIPA4 (406 aa).

The Extracellular segment spans residues 1 to 57 (MELRVANANGSCENGSIVSLYCSSQEVLCQIVRGISPEEPYNATLITWQERVRKKYG). N-linked (GlcNAc...) asparagine glycans are attached at residues asparagine 9, asparagine 14, and asparagine 42. A helical membrane pass occupies residues 58–78 (FYIGVGLAFLSCFLIGTSVIL). The Cytoplasmic portion of the chain corresponds to 79-126 (KKKGLIRLVATGATRAVNGGYGYLKDPMWWAGMATMSAGEVANFGAYA). Residues 127–147 (FAPATVVTPLGALSVLISAIF) traverse the membrane as a helical segment. Over 148 to 155 (SSYCLGES) the chain is Extracellular. The chain crosses the membrane as a helical span at residues 156–176 (LNLLGKLGCVICMAGSTVMVI). The Cytoplasmic portion of the chain corresponds to 177-197 (HAPKEEKVTTVAEMASKMKDT). Residues 198-218 (GFIVFAVLLVVSCLILIFIVA) traverse the membrane as a helical segment. Residues 219 to 225 (PRYGQRN) are Extracellular-facing. The helical transmembrane segment at 226 to 246 (ILIYIIICSVIGSFSVTAVKG) threads the bilayer. At 247–263 (LGVTIRNFFQGLPVVRH) the chain is on the cytoplasmic side. Residues 264–284 (PLPYILSLILGLSIIIQVNFL) traverse the membrane as a helical segment. The Extracellular portion of the chain corresponds to 285-295 (NRALDIFNTSL). An N-linked (GlcNAc...) asparagine glycan is attached at asparagine 292. The helical transmembrane segment at 296–316 (VFPIYYVFFTTVVVASSIVLF) threads the bilayer. The Cytoplasmic segment spans residues 317-326 (KEWYTMSAVD). The helical transmembrane segment at 327–347 (IVGTLSGFVTIILGVFMLHAF) threads the bilayer. Residues 348–406 (KDLDINQISLPHTHKNPTPAPAPEPTVIKLEDKNVLVDNIELASTPSPQQKPKVFMTDS) are Extracellular-facing.

It belongs to the NIPA family.

The protein resides in the cell membrane. The catalysed reaction is Mg(2+)(in) = Mg(2+)(out). Functionally, acts as a Mg(2+) transporter. Can also transport other divalent cations such as Ba(2+), Sr(2+) and Fe(2+) but to a much less extent than Mg(2+). May be a receptor for ligands (trioxilins A3 and B3) from the hepoxilin pathway. In Mus musculus (Mouse), this protein is Magnesium transporter NIPA4 (Nipal4).